Consider the following 112-residue polypeptide: Large ribosomal subunit protein bL17 (112 aa).

The protein belongs to the bacterial ribosomal protein bL17 family. As to quaternary structure, part of the 50S ribosomal subunit. Contacts protein L32.

The protein is Large ribosomal subunit protein bL17 of Thermoanaerobacter pseudethanolicus (strain ATCC 33223 / 39E) (Clostridium thermohydrosulfuricum).